The chain runs to 360 residues: Alkanal monooxygenase alpha chain (360 aa).

Belongs to the bacterial luciferase oxidoreductase family. Heterodimer of an alpha and a beta chain.

The enzyme catalyses a long-chain fatty aldehyde + FMNH2 + O2 = a long-chain fatty acid + hnu + FMN + H2O + 2 H(+). Functionally, light-emitting reaction in luminous bacteria. This Photorhabdus luminescens (Xenorhabdus luminescens) protein is Alkanal monooxygenase alpha chain (luxA).